The chain runs to 423 residues: Putative competence-damage inducible protein (423 aa).

The protein belongs to the CinA family.

The protein is Putative competence-damage inducible protein of Streptococcus pyogenes serotype M18 (strain MGAS8232).